A 928-amino-acid chain; its full sequence is MAWLRLQPLTSAFLHFGLVTFVLFLNCLRAEAGDSGDVPSAGQNNESCSGSSDCKEGVILPIWYPENPSLGDKIARVIVYFVALIYMFLGVSIIADRFMASIEVITSQEREVTIKKPNGETSTTTIRVWNETVSNLTLMALGSSAPEILLSLIEVCGHGFIAGDLGPSTIVGSAAFNMFIIIGICVYVIPDGETRKIKHLRVFFVTAAWSIFAYIWLYMILAVFSPGVVQVWEGLLTLFFFPVCVLLAWVADKRLLFYKYMHKKYRTDKHRGIIIETEGDHPKGIEMDGKMMNSHFLDGNFTPLEGKEVDESRREMIRILKDLKQKHPEKDLDQLVEMANYYALSHQQKSRAFYRIQATRMMTGAGNILKKHAAEQAKKTSSMSEVHTDEPEDFASKVFFDPCSYQCLENCGAVLLTVVRKGGDISKTMYVDYKTEDGSANAGADYEFTEGTVVLKPGETQKEFSVGIIDDDIFEEDEHFFVRLSNVRVEEEQLAEGMLPAILNSLPLPRAVLASPCVATVTILDDDHAGIFTFECDTIHVSESIGVMEVKVLRTSGARGTVIVPFRTVEGTAKGGGEDFEDAYGELEFKNDETVKTIHIKVIDDKAYEKNKNYVIEMMGPRMVDMSVQKALLLSPEVTDRKLTVEEEEAKRIAEMGKPVLGEHPKLEVIIEESYEFKSTVDKLIKKTNLALVVGTHSWRDQFMEAITVSAGGDEDEDESGEERLPSCFDYVMHFLTVFWKVLFACVPPTEYCHGWACFVVSILIIGMLTAIIGDLASHFGCTIGLKDSVTAVVFVAFGTSVPDTFASKAAALQDVYADASIGNVTGSNAVNVFLGIGLAWSVAAIYWAMQGQEFHVSAGTLAFSVTLFTIFAFVCLSVLLYRRRPHLGGELGGPRGCKLATTWLFVSLWLLYILFATLEAYCYIKGF.

Positions 1–30 (MAWLRLQPLTSAFLHFGLVTFVLFLNCLRA) are cleaved as a signal peptide. Residues 31-73 (EAGDSGDVPSAGQNNESCSGSSDCKEGVILPIWYPENPSLGDK) are Extracellular-facing. Residue Asn-45 is glycosylated (N-linked (GlcNAc...) asparagine). The helical transmembrane segment at 74–94 (IARVIVYFVALIYMFLGVSII) threads the bilayer. Residues 95-147 (ADRFMASIEVITSQEREVTIKKPNGETSTTTIRVWNETVSNLTLMALGSSAPE) are Cytoplasmic-facing. The chain crosses the membrane as a helical span at residues 148–168 (ILLSLIEVCGHGFIAGDLGPS). A topological domain (extracellular) is located at residue Thr-169. Residues 170–190 (IVGSAAFNMFIIIGICVYVIP) traverse the membrane as a helical segment. The Cytoplasmic portion of the chain corresponds to 191–201 (DGETRKIKHLR). Residues 202–222 (VFFVTAAWSIFAYIWLYMILA) form a helical membrane-spanning segment. Residues 223–230 (VFSPGVVQ) lie on the Extracellular side of the membrane. The chain crosses the membrane as a helical span at residues 231–251 (VWEGLLTLFFFPVCVLLAWVA). Topologically, residues 252–727 (DKRLLFYKYM…DESGEERLPS (476 aa)) are cytoplasmic. A putative calmodulin-binding region region spans residues 253 to 272 (KRLLFYKYMHKKYRTDKHRG). 2 Calx-beta domains span residues 390 to 485 (EPED…VRLS) and 519 to 618 (ATVT…VIEM). Residues Glu-409, Asp-445, Asp-470, Asp-471, Ile-473, Glu-475, Glu-478, Asp-525, Asp-526, Asp-527, Glu-543, Asp-579, Asp-605, and Glu-673 each coordinate Ca(2+). The helical transmembrane segment at 728-748 (CFDYVMHFLTVFWKVLFACVP) threads the bilayer. Residues 749-755 (PTEYCHG) are Extracellular-facing. Residues 756 to 776 (WACFVVSILIIGMLTAIIGDL) traverse the membrane as a helical segment. The Cytoplasmic segment spans residues 777 to 779 (ASH). Residues 780 to 800 (FGCTIGLKDSVTAVVFVAFGT) traverse the membrane as a helical segment. Residues 801 to 829 (SVPDTFASKAAALQDVYADASIGNVTGSN) are Extracellular-facing. Asn-824 carries N-linked (GlcNAc...) asparagine glycosylation. A helical membrane pass occupies residues 830 to 850 (AVNVFLGIGLAWSVAAIYWAM). At 851 to 861 (QGQEFHVSAGT) the chain is on the cytoplasmic side. Residues 862–882 (LAFSVTLFTIFAFVCLSVLLY) form a helical membrane-spanning segment. Over 883–904 (RRRPHLGGELGGPRGCKLATTW) the chain is Extracellular. Residues 905–925 (LFVSLWLLYILFATLEAYCYI) form a helical membrane-spanning segment. Residues 926 to 928 (KGF) lie on the Cytoplasmic side of the membrane.

The protein belongs to the Ca(2+):cation antiporter (CaCA) (TC 2.A.19) family. SLC8 subfamily. As to quaternary structure, interacts with AKAP1. Detected in gray and white matter in the spinal cord. Detected in hippocampus neurons. Detected in brain cortex neurons. Detected in skeletal muscle (at protein level). Isoform 1 and isoform 2 are highly expressed in brain; levels are higher for isoform 2. Isoform 1 and isoform 2 are detected in soleus muscle; levels are higher for isoform 1. Detected in gastrocnemius muscle.

The protein resides in the cell membrane. Its subcellular location is the perikaryon. It localises to the cell projection. It is found in the dendrite. The protein localises to the dendritic spine. The protein resides in the sarcolemma. Its subcellular location is the cytoplasm. It localises to the sarcoplasm. It is found in the cell junction. The protein localises to the mitochondrion outer membrane. The protein resides in the perinuclear region. Its subcellular location is the endoplasmic reticulum membrane. It carries out the reaction Ca(2+)(in) + 3 Na(+)(out) = Ca(2+)(out) + 3 Na(+)(in). Calcium transport is stimulated by cytoplasmic Ca(2+) and is inhibited by Na(+). Isoform 1 is more sensitive to stimulation by Ca(2+) than isoform 2. Isoform 2 is more sensitive to inactivation by Na(+). Functionally, mediates the electrogenic exchange of Ca(2+) against Na(+) ions across the cell membrane, and thereby contributes to the regulation of cytoplasmic Ca(2+) levels and Ca(2+)-dependent cellular processes. Contributes to cellular Ca(2+) homeostasis in excitable cells, both in muscle and in brain. In a first phase, voltage-gated channels mediate the rapid increase of cytoplasmic Ca(2+) levels due to release of Ca(2+) stores from the endoplasmic reticulum. SLC8A3 mediates the export of Ca(2+) from the cell during the next phase, so that cytoplasmic Ca(2+) levels rapidly return to baseline. Contributes to Ca(2+) transport during excitation-contraction coupling in muscle. In neurons, contributes to the rapid decrease of cytoplasmic Ca(2+) levels back to baseline after neuronal activation, and thereby contributes to modulate synaptic plasticity, learning and memory. Required for normal oligodendrocyte differentiation and for normal myelination. Mediates Ca(2+) efflux from mitochondria and contributes to mitochondrial Ca(2+) ion homeostasis. Isoform 1 displays higher calcium exchanger activity than isoform 2, probably because isoform 1 has a lower threshold for activation by cytoplasmic Ca(2+). This chain is Sodium/calcium exchanger 3, found in Mus musculus (Mouse).